Reading from the N-terminus, the 395-residue chain is Elongation factor Tu (395 aa).

A tr-type G domain is found at Lys-10–Val-204. The tract at residues Gly-19–Thr-26 is G1. Gly-19 to Thr-26 lines the GTP pocket. Thr-26 is a binding site for Mg(2+). The G2 stretch occupies residues Gly-60 to Ser-64. Residues Asp-81–Gly-84 form a G3 region. GTP-binding positions include Asp-81–His-85 and Asn-136–Asp-139. Positions Asn-136–Asp-139 are G4. The interval Ser-174–Leu-176 is G5.

The protein belongs to the TRAFAC class translation factor GTPase superfamily. Classic translation factor GTPase family. EF-Tu/EF-1A subfamily. In terms of assembly, monomer.

Its subcellular location is the cytoplasm. It carries out the reaction GTP + H2O = GDP + phosphate + H(+). In terms of biological role, GTP hydrolase that promotes the GTP-dependent binding of aminoacyl-tRNA to the A-site of ribosomes during protein biosynthesis. This chain is Elongation factor Tu, found in Rickettsia akari (strain Hartford).